A 340-amino-acid polypeptide reads, in one-letter code: Protein-arginine kinase (340 aa).

Positions 21–242 (VVLSSRIRLA…EQIIMQERVA (222 aa)) constitute a Phosphagen kinase C-terminal domain. ATP-binding positions include 24 to 28 (SSRIR), His79, Arg113, 164 to 168 (RASVM), and 195 to 200 (RGIYGE).

Belongs to the ATP:guanido phosphotransferase family.

It catalyses the reaction L-arginyl-[protein] + ATP = N(omega)-phospho-L-arginyl-[protein] + ADP + H(+). Catalyzes the specific phosphorylation of arginine residues in proteins. This chain is Protein-arginine kinase, found in Listeria monocytogenes serotype 4b (strain CLIP80459).